The primary structure comprises 173 residues: RNA pyrophosphohydrolase (173 aa).

A Nudix hydrolase domain is found at 6 to 149 (GFRANVGIII…KRDVYRKVMK (144 aa)). Residues 38-59 (GGVDEGESAEEAMYRELYEEVG) carry the Nudix box motif.

The protein belongs to the Nudix hydrolase family. RppH subfamily. It depends on a divalent metal cation as a cofactor.

Functionally, accelerates the degradation of transcripts by removing pyrophosphate from the 5'-end of triphosphorylated RNA, leading to a more labile monophosphorylated state that can stimulate subsequent ribonuclease cleavage. This Shewanella piezotolerans (strain WP3 / JCM 13877) protein is RNA pyrophosphohydrolase.